The following is a 267-amino-acid chain: Ribosomal RNA small subunit methyltransferase A (267 aa).

S-adenosyl-L-methionine is bound by residues Asn18, Leu20, Gly45, Glu66, Asp91, and Asn112.

This sequence belongs to the class I-like SAM-binding methyltransferase superfamily. rRNA adenine N(6)-methyltransferase family. RsmA subfamily.

The protein resides in the cytoplasm. It catalyses the reaction adenosine(1518)/adenosine(1519) in 16S rRNA + 4 S-adenosyl-L-methionine = N(6)-dimethyladenosine(1518)/N(6)-dimethyladenosine(1519) in 16S rRNA + 4 S-adenosyl-L-homocysteine + 4 H(+). In terms of biological role, specifically dimethylates two adjacent adenosines (A1518 and A1519) in the loop of a conserved hairpin near the 3'-end of 16S rRNA in the 30S particle. May play a critical role in biogenesis of 30S subunits. This is Ribosomal RNA small subunit methyltransferase A from Shewanella sediminis (strain HAW-EB3).